We begin with the raw amino-acid sequence, 292 residues long: Cbb3-type cytochrome c oxidase subunit CcoP (292 aa).

2 helical membrane passes run 11 to 31 (FGLIAALVILVLTIYESSSLI) and 62 to 82 (VGWIASFMCTIVWAFWYFFFG). Cytochrome c domains are found at residues 116-195 (ELVD…MAEI) and 205-288 (QLID…QSLK). Residues Cys129, Cys132, His133, Met174, Cys219, Cys222, His223, and Met264 each contribute to the heme c site.

It belongs to the CcoP / FixP family. Component of the cbb3-type cytochrome c oxidase at least composed of CcoN, CcoO, CcoQ and CcoP. Heme c is required as a cofactor.

Its subcellular location is the cell inner membrane. It functions in the pathway energy metabolism; oxidative phosphorylation. Its function is as follows. C-type cytochrome. Part of the cbb3-type cytochrome c oxidase complex. CcoP subunit is required for transferring electrons from donor cytochrome c via its heme groups to CcoO subunit. From there, electrons are shuttled to the catalytic binuclear center of CcoN subunit where oxygen reduction takes place. The complex also functions as a proton pump. In Helicobacter pylori (strain 52), this protein is Cbb3-type cytochrome c oxidase subunit CcoP.